The following is a 707-amino-acid chain: Pheromone-processing carboxypeptidase KEX1 (707 aa).

An N-terminal signal peptide occupies residues 1–17 (MLLSVFIILINTLFVLA). The Lumenal portion of the chain corresponds to 18 to 564 (IPPKEGSDNN…EESTSSKFTR (547 aa)). 2 N-linked (GlcNAc...) asparagine glycosylation sites follow: N64 and N121. Residue S183 is part of the active site. N293 and N378 each carry an N-linked (GlcNAc...) asparagine glycan. The active site involves D393. Residues N440 and N448 are each glycosylated (N-linked (GlcNAc...) asparagine). The active site involves H451. Residues 496-557 (GQEIPADESS…ASFIPEPEES (62 aa)) are disordered. Residues 503 to 533 (ESSKPIEDKPDDKPIEDKPEETKPEQTKPED) are compositionally biased toward basic and acidic residues. The span at 536 to 549 (SSSTSEIIPTSEAS) shows a compositional bias: low complexity. Residues 565-585 (LIQLGVIFIIFWGVYILYVSY) traverse the membrane as a helical segment. Over 586–707 (RARPSSIIKK…GNPKKTESKS (122 aa)) the chain is Cytoplasmic. The interval 644-707 (NTSNRGRYAP…GNPKKTESKS (64 aa)) is disordered. Positions 683-694 (SDDDEDDDEDVE) are enriched in acidic residues. Over residues 695 to 707 (THEGNPKKTESKS) the composition is skewed to basic and acidic residues.

Belongs to the peptidase S10 family.

It is found in the golgi apparatus. Its subcellular location is the trans-Golgi network membrane. It carries out the reaction Preferential release of a C-terminal arginine or lysine residue.. In terms of biological role, protease with a carboxypeptidase B-like function involved in the C-terminal processing of the lysine and arginine residues from protein precursors. Promotes cell fusion and is involved in the programmed cell death. The protein is Pheromone-processing carboxypeptidase KEX1 (KEX1) of Candida tropicalis (strain ATCC MYA-3404 / T1) (Yeast).